A 57-amino-acid chain; its full sequence is MAVPKRRTSKTRKNKRRTHFKISVPGMTECPNCGEYKLSHRVCKNCGSYNGEEVVSK.

The protein belongs to the bacterial ribosomal protein bL32 family.

The protein is Large ribosomal subunit protein bL32 of Staphylococcus epidermidis (strain ATCC 35984 / DSM 28319 / BCRC 17069 / CCUG 31568 / BM 3577 / RP62A).